The primary structure comprises 311 residues: Ribosomal RNA small subunit methyltransferase H (311 aa).

Residues 32 to 34, aspartate 52, phenylalanine 79, aspartate 100, and glutamine 107 each bind S-adenosyl-L-methionine; that span reads AGH.

It belongs to the methyltransferase superfamily. RsmH family.

The protein localises to the cytoplasm. The enzyme catalyses cytidine(1402) in 16S rRNA + S-adenosyl-L-methionine = N(4)-methylcytidine(1402) in 16S rRNA + S-adenosyl-L-homocysteine + H(+). Functionally, specifically methylates the N4 position of cytidine in position 1402 (C1402) of 16S rRNA. The sequence is that of Ribosomal RNA small subunit methyltransferase H from Staphylococcus aureus (strain COL).